Here is a 91-residue protein sequence, read N- to C-terminus: Late embryogenis abundant protein 2 (91 aa).

A disordered region spans residues 47–72 (KRAGEASSEKAPWVPDPKTGYYRPET).

The protein belongs to the LEA type 3 family.

The protein localises to the cytoplasm. The protein resides in the nucleus. This chain is Late embryogenis abundant protein 2, found in Arabidopsis thaliana (Mouse-ear cress).